The primary structure comprises 481 residues: tRNA sulfurtransferase (481 aa).

The 103-residue stretch at 54–156 folds into the THUMP domain; it reads ADGDGPLRHI…GKDVFFYHEI (103 aa). Residues 174 to 175, Lys-256, Gly-278, and Gln-287 each bind ATP; that span reads LV. An intrachain disulfide couples Cys-334 to Cys-433. A Rhodanese domain is found at 388-463; it reads IPKDAVIIDL…YYSTFSDLKK (76 aa). Cys-433 acts as the Cysteine persulfide intermediate in catalysis.

Belongs to the ThiI family.

It localises to the cytoplasm. It carries out the reaction [ThiI sulfur-carrier protein]-S-sulfanyl-L-cysteine + a uridine in tRNA + 2 reduced [2Fe-2S]-[ferredoxin] + ATP + H(+) = [ThiI sulfur-carrier protein]-L-cysteine + a 4-thiouridine in tRNA + 2 oxidized [2Fe-2S]-[ferredoxin] + AMP + diphosphate. It catalyses the reaction [ThiS sulfur-carrier protein]-C-terminal Gly-Gly-AMP + S-sulfanyl-L-cysteinyl-[cysteine desulfurase] + AH2 = [ThiS sulfur-carrier protein]-C-terminal-Gly-aminoethanethioate + L-cysteinyl-[cysteine desulfurase] + A + AMP + 2 H(+). The protein operates within cofactor biosynthesis; thiamine diphosphate biosynthesis. Functionally, catalyzes the ATP-dependent transfer of a sulfur to tRNA to produce 4-thiouridine in position 8 of tRNAs, which functions as a near-UV photosensor. Also catalyzes the transfer of sulfur to the sulfur carrier protein ThiS, forming ThiS-thiocarboxylate. This is a step in the synthesis of thiazole, in the thiamine biosynthesis pathway. The sulfur is donated as persulfide by IscS. The chain is tRNA sulfurtransferase from Thermoplasma acidophilum (strain ATCC 25905 / DSM 1728 / JCM 9062 / NBRC 15155 / AMRC-C165).